We begin with the raw amino-acid sequence, 341 residues long: Glycerol-3-phosphate dehydrogenase [NAD(P)+] (341 aa).

Residues S14, F15, R35, and K108 each coordinate NADPH. Residues K108 and G136 each contribute to the sn-glycerol 3-phosphate site. A140 is an NADPH binding site. 5 residues coordinate sn-glycerol 3-phosphate: K191, D244, S254, R255, and N256. Residue K191 is the Proton acceptor of the active site. Residue R255 participates in NADPH binding. Residues V279 and E281 each coordinate NADPH.

Belongs to the NAD-dependent glycerol-3-phosphate dehydrogenase family.

The protein resides in the cytoplasm. The catalysed reaction is sn-glycerol 3-phosphate + NAD(+) = dihydroxyacetone phosphate + NADH + H(+). It carries out the reaction sn-glycerol 3-phosphate + NADP(+) = dihydroxyacetone phosphate + NADPH + H(+). It functions in the pathway membrane lipid metabolism; glycerophospholipid metabolism. Functionally, catalyzes the reduction of the glycolytic intermediate dihydroxyacetone phosphate (DHAP) to sn-glycerol 3-phosphate (G3P), the key precursor for phospholipid synthesis. The chain is Glycerol-3-phosphate dehydrogenase [NAD(P)+] from Pseudomonas fluorescens (strain ATCC BAA-477 / NRRL B-23932 / Pf-5).